The sequence spans 61 residues: Mu-diguetoxin-Dc1c (61 aa).

3 disulfides stabilise this stretch: Cys12–Cys25, Cys19–Cys39, and Cys24–Cys53.

This sequence belongs to the neurotoxin 26 (DTX) family. As to expression, expressed by the venom gland.

It is found in the secreted. Acts by delaying the inactivation of presynaptic voltage-sensitive sodium channels (Nav). Acts against insects and causes a progressive spastic paralysis. The sequence is that of Mu-diguetoxin-Dc1c from Diguetia canities (Desert bush spider).